We begin with the raw amino-acid sequence, 2138 residues long: DNA polymerase epsilon catalytic subunit B (2138 aa).

Positions Glu1224–Thr1231 match the Nuclear localization signal 1 motif. Zn(2+)-binding residues include Cys2015, Cys2018, Cys2040, and Cys2045. A CysA-type zinc finger spans residues Cys2015–Cys2045. 4 residues coordinate [4Fe-4S] cluster: Cys2076, Cys2079, Cys2091, and Cys2093. A CysB motif motif is present at residues Cys2076–Cys2093. Residues His2107–Leu2114 carry the Nuclear localization signal 2 motif.

Belongs to the DNA polymerase type-B family. As to quaternary structure, heterotetramer. [4Fe-4S] cluster serves as cofactor. Mostly expressed at low levels in inflorescence (floral meristem and flowers until anthesis), and, to a lower extent, in seeds.

It is found in the nucleus. It catalyses the reaction DNA(n) + a 2'-deoxyribonucleoside 5'-triphosphate = DNA(n+1) + diphosphate. Functionally, DNA polymerase II, which participates in chromosomal DNA replication. Involved in the determination of cell fate during plant embryogenesis. Contributes to the flowering time repression. This Arabidopsis thaliana (Mouse-ear cress) protein is DNA polymerase epsilon catalytic subunit B (POL2B).